Here is a 149-residue protein sequence, read N- to C-terminus: Putative pre-16S rRNA nuclease (149 aa).

Belongs to the YqgF nuclease family.

It is found in the cytoplasm. Functionally, could be a nuclease involved in processing of the 5'-end of pre-16S rRNA. In Burkholderia orbicola (strain MC0-3), this protein is Putative pre-16S rRNA nuclease.